A 42-amino-acid polypeptide reads, in one-letter code: Cytochrome b559 subunit beta (42 aa).

Residues 17–33 (WLAIHAIGIPAVFFIGS) form a helical membrane-spanning segment. H21 contributes to the heme binding site.

It belongs to the PsbE/PsbF family. In terms of assembly, heterodimer of an alpha subunit and a beta subunit. PSII is composed of 1 copy each of membrane proteins PsbA, PsbB, PsbC, PsbD, PsbE, PsbF, PsbH, PsbI, PsbJ, PsbK, PsbL, PsbM, PsbT, PsbX, PsbY, PsbZ, Psb30/Ycf12, at least 3 peripheral proteins of the oxygen-evolving complex and a large number of cofactors. It forms dimeric complexes. Heme b serves as cofactor.

It is found in the plastid. The protein resides in the cyanelle thylakoid membrane. This b-type cytochrome is tightly associated with the reaction center of photosystem II (PSII). PSII is a light-driven water:plastoquinone oxidoreductase that uses light energy to abstract electrons from H(2)O, generating O(2) and a proton gradient subsequently used for ATP formation. It consists of a core antenna complex that captures photons, and an electron transfer chain that converts photonic excitation into a charge separation. In Cyanophora paradoxa, this protein is Cytochrome b559 subunit beta.